The primary structure comprises 531 residues: SWI/SNF-related matrix-associated actin-dependent regulator of chromatin subfamily D member 2 (531 aa).

Asymmetric dimethylarginine occurs at positions 81 and 104. Phosphoserine is present on serine 203. The disordered stretch occupies residues 205-226 (SKAEGDSAGTAGTPGGTPAGDK). Threonine 217 bears the Phosphothreonine mark. Residue lysine 226 forms a Glycyl lysine isopeptide (Lys-Gly) (interchain with G-Cter in SUMO2) linkage. Positions 306 to 383 (HQPPQYKLDP…PMKLAGLLQH (78 aa)) constitute an SWIB/MDM2 domain.

Belongs to the SMARCD family. In terms of assembly, component of the multiprotein chromatin-remodeling complexes SWI/SNF: SWI/SNF-A (BAF), SWI/SNF-B (PBAF) and related complexes. The canonical complex contains a catalytic subunit (either SMARCA4/BRG1/BAF190A or SMARCA2/BRM/BAF190B), and at least SMARCE1, ACTL6A/BAF53, SMARCC1/BAF155, SMARCC2/BAF170, and SMARCB1/SNF5/BAF47. Other subunits specific to each of the complexes may also be present permitting several possible combinations developmentally and tissue specific. Component of the BAF complex, which includes at least actin (ACTB), ARID1A/BAF250A, ARID1B/BAF250B, SMARCA2/BRM, SMARCA4/BRG1, ACTL6A/BAF53, ACTL6B/BAF53B, SMARCE1/BAF57, SMARCC1/BAF155, SMARCC2/BAF170, SMARCB1/SNF5/INI1, and one or more SMARCD1/BAF60A, SMARCD2/BAF60B, or SMARCD3/BAF60C. In muscle cells, the BAF complex also contains DPF3. Component of the SWI/SNF-B (PBAF) chromatin remodeling complex, at least composed of SMARCA4/BRG1, SMARCB1/BAF47/SNF5, ACTL6A/BAF53A or ACTL6B/BAF53B, SMARCE1/BAF57, SMARCD1/BAF60A, SMARCD2/BAF60B, perhaps SMARCD3/BAF60C, SMARCC1/BAF155, SMARCC2/BAF170, PBRM1/BAF180, ARID2/BAF200 and actin (ACTB). Interacts with UNKL. Interacts with CEBPE. Post-translationally, ubiquitinated through a signaling process involving RAC1 and the RING finger protein UNKL. As to expression, isoform 2 is expressed in the pancreas.

It is found in the nucleus. Involved in transcriptional activation and repression of select genes by chromatin remodeling (alteration of DNA-nucleosome topology). Component of SWI/SNF chromatin remodeling complexes that carry out key enzymatic activities, changing chromatin structure by altering DNA-histone contacts within a nucleosome in an ATP-dependent manner. Critical regulator of myeloid differentiation, controlling granulocytopoiesis and the expression of genes involved in neutrophil granule formation. This Homo sapiens (Human) protein is SWI/SNF-related matrix-associated actin-dependent regulator of chromatin subfamily D member 2 (SMARCD2).